The chain runs to 59 residues: Potassium channel toxin alpha-KTx 1.14 (59 aa).

The N-terminal stretch at 1–22 (MKKISFLLLLAIVICSIGWTDG) is a signal peptide. The residue at position 23 (Gln-23) is a Pyrrolidone carboxylic acid. 3 disulfides stabilise this stretch: Cys-29–Cys-50, Cys-35–Cys-55, and Cys-39–Cys-57.

It belongs to the short scorpion toxin superfamily. Potassium channel inhibitor family. Alpha-KTx 01 subfamily. In terms of tissue distribution, expressed by the venom gland.

It localises to the secreted. In terms of biological role, potent blocker of both large-conductance calcium-activated potassium channels (KCa1.1/KCNMA1) and voltage-gated potassium channels (Kv1.3/KCNA3 and ERG1/Kv11.1/KCNH2). The sequence is that of Potassium channel toxin alpha-KTx 1.14 from Olivierus martensii (Manchurian scorpion).